The chain runs to 178 residues: RNA pyrophosphohydrolase (178 aa).

Residues 18–171 (PYRPCVGLMV…KRKVYEQVVA (154 aa)) form the Nudix hydrolase domain. A Nudix box motif is present at residues 59-80 (GGIDKGEDPAQAALRELYEETG).

This sequence belongs to the Nudix hydrolase family. RppH subfamily. It depends on a divalent metal cation as a cofactor.

Its function is as follows. Accelerates the degradation of transcripts by removing pyrophosphate from the 5'-end of triphosphorylated RNA, leading to a more labile monophosphorylated state that can stimulate subsequent ribonuclease cleavage. The polypeptide is RNA pyrophosphohydrolase (Brucella canis (strain ATCC 23365 / NCTC 10854 / RM-666)).